The chain runs to 85 residues: Small ribosomal subunit protein eS21 (85 aa).

It belongs to the eukaryotic ribosomal protein eS21 family. As to quaternary structure, component of the 40S small ribosomal subunit.

The protein localises to the cytoplasm. It localises to the cytosol. The protein resides in the rough endoplasmic reticulum. This Branchiostoma belcheri (Amphioxus) protein is Small ribosomal subunit protein eS21 (RPS21).